A 566-amino-acid polypeptide reads, in one-letter code: Putative pentatricopeptide repeat-containing protein At1g28020 (566 aa).

PPR repeat units lie at residues 136–171, 172–206, 207–242, 243–273, 279–309, 314–348, 349–385, 468–504, and 505–540; these read GDSV…GLLL, RPVP…DVEA, DNVT…GIKL, EWHT…TEQL, LKSA…YKSK, DNNG…PLEF, DHRI…RMNK, DYSV…NVDP, and DLIT…GIKL.

Belongs to the PPR family. P subfamily.

This is Putative pentatricopeptide repeat-containing protein At1g28020 from Arabidopsis thaliana (Mouse-ear cress).